Reading from the N-terminus, the 180-residue chain is Stathmin-3 (180 aa).

Positions 38 to 180 constitute an SLD domain; that stretch reads GDMEVKQLDK…NKEQREEISG (143 aa). The span at 60-74 shows a compositional bias: low complexity; it reads SPSDLSPESPILSSP. Residues 60–82 are disordered; sequence SPSDLSPESPILSSPPKKKDLSL. Residues 75–179 adopt a coiled-coil conformation; that stretch reads PKKKDLSLEE…RNKEQREEIS (105 aa).

It belongs to the stathmin family.

The sequence is that of Stathmin-3 (STMN3) from Gallus gallus (Chicken).